The sequence spans 916 residues: Oxysterol-binding protein 2 (916 aa).

Disordered regions lie at residues 1-20, 34-121, and 139-163; these read MGKAAAPSRGGGCGGRSRGL, TAAP…PFTK, and PESGSLPALKPLPLLRPGQAKTPLG. Residues 49-58 are compositionally biased toward pro residues; sequence EPKPQPQPVP. Residues 79-92 are compositionally biased toward low complexity; that stretch reads RSEPVSETTSEPEP. Residues 99–113 are compositionally biased toward polar residues; that stretch reads ELLQGSRPGSESSSG. Positions 144 to 155 are enriched in low complexity; the sequence is LPALKPLPLLRP. The 93-residue stretch at 182 to 274 folds into the PH domain; the sequence is LDSFEGWLLK…WITALELAKA (93 aa). Disordered regions lie at residues 282 to 301 and 417 to 448; these read THSDDSGDDDEATTPADKSE and FHSAPGRPANPSKSFIEGSLLTPKGEDSEEDE. A Phosphoserine modification is found at serine 287. Residue serine 763 is modified to Phosphoserine. Residues 813 to 842 are disordered; the sequence is EGVAPTDSRLRPDQRLMEKGRWDEANTEKQ.

Belongs to the OSBP family. In terms of assembly, interacts with CCDC159. As to expression, expressed mainly in retina, testis, and fetal liver.

It localises to the membrane. It is found in the cytoplasmic vesicle. The protein localises to the secretory vesicle. Its subcellular location is the acrosome. In terms of biological role, binds 7-ketocholesterol. Acts during spermatid development where its function is required prior to the removal of cytoplasm from the sperm head. The sequence is that of Oxysterol-binding protein 2 (OSBP2) from Homo sapiens (Human).